Reading from the N-terminus, the 67-residue chain is UPF0434 protein Tcr_0959 (67 aa).

The protein belongs to the UPF0434 family.

This is UPF0434 protein Tcr_0959 from Hydrogenovibrio crunogenus (strain DSM 25203 / XCL-2) (Thiomicrospira crunogena).